The primary structure comprises 328 residues: Cell division protein ZipA (328 aa).

The Periplasmic portion of the chain corresponds to 1 to 4; the sequence is MDLN. Residues 5-25 traverse the membrane as a helical segment; it reads TILIIVGIVALVALIVHGLWS. Topologically, residues 26–328 are cytoplasmic; sequence NRREKSKYFD…NAEQAYLARV (303 aa). Residues 44 to 82 are disordered; that stretch reads SLTSRSHTQEEMVQPNNISPNTYVENGHTPISQPTTEKL. The segment covering 57–81 has biased composition (polar residues); sequence QPNNISPNTYVENGHTPISQPTTEK.

Belongs to the ZipA family. Interacts with FtsZ via their C-terminal domains.

The protein localises to the cell inner membrane. In terms of biological role, essential cell division protein that stabilizes the FtsZ protofilaments by cross-linking them and that serves as a cytoplasmic membrane anchor for the Z ring. Also required for the recruitment to the septal ring of downstream cell division proteins. The polypeptide is Cell division protein ZipA (Haemophilus influenzae (strain PittGG)).